A 339-amino-acid chain; its full sequence is DNA repair protein RAD51 homolog 1 (339 aa).

Residues 1–22 form a disordered region; that stretch reads MAMQMQLEASADTSVEEESFGP. Position 2 is an N-acetylalanine (Ala2). Residue Thr13 is modified to Phosphothreonine. Ser14 carries the post-translational modification Phosphoserine. The region spanning 48–77 is the HhH domain; sequence TVEAVAYAPKKELINIKGISEAKADKILTE. Tyr54 carries the post-translational modification Phosphotyrosine; by ABL1. Glycyl lysine isopeptide (Lys-Gly) (interchain with G-Cter in ubiquitin) cross-links involve residues Lys58 and Lys64. 127-134 is a binding site for ATP; it reads GEFRTGKT. The interaction with PALB2 stretch occupies residues 184 to 257; the sequence is DVLDNVAYAR…FLRMLLRLAD (74 aa). The Nuclear export signal; masked by the interaction with BRCA2 motif lies at 245–260; that stretch reads LARFLRMLLRLADEFG. Thr309 bears the Phosphothreonine; by CHEK1 mark.

The protein belongs to the RecA family. RAD51 subfamily. Forms linear homooligomers, giving rise to a RAD51 nucleoprotein filament, which is essential for strand-pairing reactions during DNA recombination. Interacts with BRCA1 and either directly or indirectly with p53. Interacts with XRCC3, RAD54L and RAD54B. Interacts with the BCDX2 subcomplex RAD51C:RAD51B. Component of the homologous recombination repair (HR) complex composed of ERCC5/XPG, BRCA2, PALB2, DSS1 and RAD51. Interacts directly with PALB2 which may serve as a scaffold for a HR complex containing PALB2, BRCA2, RAD51C, RAD51 and XRCC3. Interacts with RAD51AP1 and RAD51AP2. Interacts with CHEK1, and this may require prior phosphorylation of CHEK1. Interacts with the MND1-PSMC3IP heterodimer. Found in a complex, at least composed of BLM, RAD51 and SPIDR; the complex formation is mediated by SPIDR. Interacts with SPIDR; the interaction is direct and recruits RAD51 to DNA damage sites. Interacts with FIGNL1 (via N-terminal one-half region); the interaction is direct. Interacts with RAD51AP1 (via C-terminal region); the interaction is direct. Interacts with NABP2, RPA1, PALB2 and RAD51. Interacts with SWI5/C9orf119, and at lower level with SFR1/MEIR5. Interacts with hyperphosphorylated RPA2; this interaction is necessary for efficient recruitment to chromatin in response to DNA damage. Interacts with SWSAP1; involved in homologous recombination repair. Interacts with PARPBP, BRCA2 and RECQL5; these interactions interfere with the formation of the RAD51-DNA homologous recombination structure. Interacts with POLQ; POLQ acts as an inhibitor of homology-recombination repair (HR) pathway by limiting RAD51 accumulation at resected ends. Interacts with POLN. Interacts with FBH1. Interacts with RFWD3. Interacts with the MCM8-MCM9 complex; the interaction recruits RAD51 to DNA damage sites. Component of a multiprotein complex with MEIOB and SPATA22. Interacts with the complex BRME1:HSF2BP:BRCA2. Interacts with HELQ; stimulating HELQ DNA helicase activity and ability to unwing DNA. Interacts with MMS22L; the interaction is direct and promotes recruitment of RAD51 to sites of DNA damage. Interacts with the ATAD5 RFC-like complex. Within the ATAD5 RFC-like complex, interacts with ATAD5 (via N-terminus); the interaction is direct and enhanced under replication stress. Interacts with WDR48; the interaction is enhanced under replication stress. Interacts with DNA helicase ZGRF1; the interaction promotes RAD51 strand exchange activity. Interacts (when phosphorylated) with TOPBP1; interaction takes place following phosphorylation by CK2 and PLK1 and promotes recruitment to DNA damage sites. Interacts with GRB2; this interaction inhibits RAD51 ATPase activity to stabilize RAD51 on stalled replication forks. Ubiquitinated by the SCF(FBH1) E3 ubiquitin ligase complex, regulating RAD51 subcellular location and preventing its association with DNA. Ubiquitinated by RFWD3 in response to DNA damage: ubiquitination leads to degradation by the proteasome, promoting homologous recombination. In terms of processing, phosphorylation of Thr-309 by CHEK1 may enhance association with chromatin at sites of DNA damage and promote DNA repair by homologous recombination. Phosphorylated at Ser-14 by PLK1, triggering phosphorylation at Thr-13 by CK2, thereby promoting interaction with TOPBP1 and recruitment to DNA damage sites during S-phase. Phosphorylation by ABL1 inhibits function. In terms of tissue distribution, expressed in the testes (at protein level). Expressed in the brain (at protein level). Expressed in the thymus, spleen, ovary and small intestine.

The protein resides in the nucleus. It is found in the cytoplasm. Its subcellular location is the perinuclear region. It localises to the mitochondrion matrix. The protein localises to the chromosome. The protein resides in the cytoskeleton. It is found in the microtubule organizing center. Its subcellular location is the centrosome. Its function is as follows. Plays an important role in homologous strand exchange, a key step in DNA repair through homologous recombination (HR). Binds to single-stranded DNA in an ATP-dependent manner to form nucleoprotein filaments which are essential for the homology search and strand exchange. Catalyzes the recognition of homology and strand exchange between homologous DNA partners to form a joint molecule between a processed DNA break and the repair template. Recruited to resolve stalled replication forks during replication stress. Part of a PALB2-scaffolded HR complex containing BRCA2 and RAD51C and which is thought to play a role in DNA repair by HR. Plays a role in regulating mitochondrial DNA copy number under conditions of oxidative stress in the presence of RAD51C and XRCC3. Also involved in interstrand cross-link repair. The sequence is that of DNA repair protein RAD51 homolog 1 from Mus musculus (Mouse).